Reading from the N-terminus, the 406-residue chain is Protrudin (406 aa).

Residues 1–71 (MQAAERDGVA…AAEGVRALLR (71 aa)) lie on the Cytoplasmic side of the membrane. Positions 1-97 (MQAAERDGVA…LLLTLDQAAW (97 aa)) are sufficient for homooligomerization. Residues 1–210 (MQAAERDGVA…LYLLPLCWVM (210 aa)) are sufficient for localization to endoplasmic reticulum tubular network. The helical transmembrane segment at 72–92 (WQRPLCSLLVCLGLNFLLLTL) threads the bilayer. Residue Asp93 is a topological domain, lumenal. A helical membrane pass occupies residues 94 to 114 (QAAWYSVLALLVLLPALLGYL). Residues 115 to 192 (QETYRVRPSE…NPTVSSQFYG (78 aa)) lie on the Cytoplasmic side of the membrane. Residues 193-213 (ALLGSVCILYLLPLCWVMAIL) constitute an intramembrane region (helical). The Cytoplasmic segment spans residues 214–406 (NSTLFLGNSQ…CAQCNQMLIK (193 aa)). Residues 239–295 (LGTKPLESAPEPAKPLPTDAPPDRTPTPTSTEDLTPGSVEEAEEAEPDEEFKDAIEE) are disordered. The segment covering 250–263 (PAKPLPTDAPPDRT) has biased composition (pro residues). A compositionally biased stretch (acidic residues) spans 278–295 (EEAEEAEPDEEFKDAIEE). An FYVE-type zinc finger spans residues 339 to 405 (SNNFGTCTGC…VCAQCNQMLI (67 aa)). Residues Cys345, Cys348, Cys361, Cys364, Cys369, Cys372, Cys397, and Cys400 each coordinate Zn(2+).

In terms of assembly, can form homooligomers (monomers, dimers and tetramers).

The protein localises to the recycling endosome membrane. It localises to the endoplasmic reticulum membrane. Its subcellular location is the cell projection. It is found in the growth cone membrane. Key regulator of RAB11-dependent vesicular trafficking during neurite extension through polarized membrane transport. Promotes axonal elongation and contributes to the establishment of neuronal cell polarity. Involved in nerve growth factor-induced neurite formation in VAPA-dependent manner. Contributes to both the formation and stabilization of the tubular ER network. Involved in ER morphogenesis by regulating the sheet-to-tubule balance and possibly the density of tubule interconnections. The sequence is that of Protrudin (ZFYVE27) from Gallus gallus (Chicken).